We begin with the raw amino-acid sequence, 172 residues long: Ribosome maturation factor RimM (172 aa).

Positions E97 to L170 constitute a PRC barrel domain.

It belongs to the RimM family. In terms of assembly, binds ribosomal protein uS19.

Its subcellular location is the cytoplasm. An accessory protein needed during the final step in the assembly of 30S ribosomal subunit, possibly for assembly of the head region. Essential for efficient processing of 16S rRNA. May be needed both before and after RbfA during the maturation of 16S rRNA. It has affinity for free ribosomal 30S subunits but not for 70S ribosomes. The protein is Ribosome maturation factor RimM of Listeria innocua serovar 6a (strain ATCC BAA-680 / CLIP 11262).